Reading from the N-terminus, the 447-residue chain is Protein odr-4 homolog (447 aa).

Helical transmembrane passes span 82–102 (MLPG…ELAD) and 425–445 (IGVI…FHYF).

The protein belongs to the ODR-4 family. In terms of tissue distribution, ubiquitously expressed.

Its subcellular location is the membrane. Its function is as follows. May play a role in the trafficking of a subset of G-protein coupled receptors. This is Protein odr-4 homolog (Odr4) from Mus musculus (Mouse).